The following is a 166-amino-acid chain: Ribosome maturation factor RimM (166 aa).

Residues 91 to 163 (DDGFYDHELE…TCVITPPEGL (73 aa)) enclose the PRC barrel domain.

Belongs to the RimM family. Binds ribosomal protein uS19.

The protein localises to the cytoplasm. In terms of biological role, an accessory protein needed during the final step in the assembly of 30S ribosomal subunit, possibly for assembly of the head region. Essential for efficient processing of 16S rRNA. May be needed both before and after RbfA during the maturation of 16S rRNA. It has affinity for free ribosomal 30S subunits but not for 70S ribosomes. This is Ribosome maturation factor RimM from Corynebacterium diphtheriae (strain ATCC 700971 / NCTC 13129 / Biotype gravis).